We begin with the raw amino-acid sequence, 215 residues long: WAT1-related protein At3g28060 (215 aa).

The next 5 membrane-spanning stretches (helical) occupy residues 48 to 68 (IIIGSSGEVFWVEYTLIAVAY), 82 to 102 (FALALSHNVCVSISCAFVSLF), 117 to 137 (IMLICIVATGVVNSTSYVVES), 146 to 166 (VFLAMFRPLSIVTAVVLGAIF), and 176 to 196 (VIGGTLISIGFSVHNSLFHIA). The EamA domain maps to 65-186 (AVAYIVQTHI…IGGTLISIGF (122 aa)).

It belongs to the drug/metabolite transporter (DMT) superfamily. Plant drug/metabolite exporter (P-DME) (TC 2.A.7.4) family.

It localises to the membrane. The chain is WAT1-related protein At3g28060 from Arabidopsis thaliana (Mouse-ear cress).